Here is a 165-residue protein sequence, read N- to C-terminus: Iron sulfur cluster assembly protein 1, mitochondrial (165 aa).

A mitochondrion-targeting transit peptide spans 1-27; sequence MLPVITRFARPALMAIRPVNAMGVLRA. Positions 132–136 are SSQ1 binding region; it reads LPPVK.

It belongs to the NifU family. Homodimer, but can exist as monomers or trimers. Oligomerization may be regulated by Zn(2+) availability. Component of the core Fe-S cluster (ISC) assembly machinery. Interacts with YFH1/frataxin with a 1 to 1 stoichiometry; the interaction is direct. Interacts with the mitochondrial co-chaperones JAC1 and SSQ1. Interacts with NFS1. Interacts with YAH1/ferredoxin; interacts with the reduced form. [2Fe-2S] cluster serves as cofactor. The cofactor is Zn(2+).

It localises to the mitochondrion matrix. It functions in the pathway cofactor biosynthesis; iron-sulfur cluster biosynthesis. Its function is as follows. Scaffold protein for the de novo synthesis of iron-sulfur (Fe-S) clusters within mitochondria, which is required for maturation of both mitochondrial and cytoplasmic [2Fe-2S] and [4Fe-4S] proteins. First, a [2Fe-2S] cluster is transiently assembled on the scaffold proteins ISU1 and ISU2. In a second step, the cluster is released from ISU1/ISU2, transferred to glutaredoxin GRX5, followed by the formation of mitochondrial [2Fe-2S] proteins, the synthesis of [4Fe-4S] clusters and their target-specific insertion into the recipient apoproteins. Cluster assembly on ISU1/ISU2 depends on the function of the cysteine desulfurase complex NFS1-ISD11, which serves as the sulfur donor for cluster synthesis, the iron-binding protein frataxin (YFH1) as the putative iron donor, and the electron transfer chain comprised of ferredoxin reductase ARH1 and ferredoxin YAH1, which receive their electrons from NADH. Fe-S cluster release from ISU1/ISU2 is achieved by interaction with the Hsp70 chaperone SSQ1, assisted by the DnaJ-like co-chaperone JAC1 and the nucleotide exchange factor MGE1. ISU1 is the major isoform in yeast, while ISU2 is not detectable in cells grown to stationary phase. Also involved in production of a sulfur precursor required for thiolation of cytoplasmic tRNAs. The chain is Iron sulfur cluster assembly protein 1, mitochondrial from Saccharomyces cerevisiae (strain ATCC 204508 / S288c) (Baker's yeast).